The following is a 316-amino-acid chain: Acetyl-coenzyme A carboxylase carboxyl transferase subunit alpha (316 aa).

A CoA carboxyltransferase C-terminal domain is found at 39–293 (RLQDKSKALT…RGELLAQLKM (255 aa)).

The protein belongs to the AccA family. In terms of assembly, acetyl-CoA carboxylase is a heterohexamer composed of biotin carboxyl carrier protein (AccB), biotin carboxylase (AccC) and two subunits each of ACCase subunit alpha (AccA) and ACCase subunit beta (AccD).

It is found in the cytoplasm. It carries out the reaction N(6)-carboxybiotinyl-L-lysyl-[protein] + acetyl-CoA = N(6)-biotinyl-L-lysyl-[protein] + malonyl-CoA. Its pathway is lipid metabolism; malonyl-CoA biosynthesis; malonyl-CoA from acetyl-CoA: step 1/1. In terms of biological role, component of the acetyl coenzyme A carboxylase (ACC) complex. First, biotin carboxylase catalyzes the carboxylation of biotin on its carrier protein (BCCP) and then the CO(2) group is transferred by the carboxyltransferase to acetyl-CoA to form malonyl-CoA. The polypeptide is Acetyl-coenzyme A carboxylase carboxyl transferase subunit alpha (Pseudomonas aeruginosa (strain UCBPP-PA14)).